The sequence spans 218 residues: Thiopurine S-methyltransferase (218 aa).

Residues Trp10, Leu45, Glu66, and Arg123 each coordinate S-adenosyl-L-methionine.

The protein belongs to the class I-like SAM-binding methyltransferase superfamily. TPMT family.

The protein localises to the cytoplasm. The catalysed reaction is S-adenosyl-L-methionine + a thiopurine = S-adenosyl-L-homocysteine + a thiopurine S-methylether.. The polypeptide is Thiopurine S-methyltransferase (Shewanella amazonensis (strain ATCC BAA-1098 / SB2B)).